We begin with the raw amino-acid sequence, 422 residues long: Serine--tRNA ligase (422 aa).

Residue 229–231 participates in L-serine binding; that stretch reads TAE. ATP is bound by residues 260–262 and valine 276; that span reads RRE. Glutamate 283 is a binding site for L-serine. An ATP-binding site is contributed by 349–352; that stretch reads EVTS. Threonine 384 contributes to the L-serine binding site.

This sequence belongs to the class-II aminoacyl-tRNA synthetase family. Type-1 seryl-tRNA synthetase subfamily. Homodimer. The tRNA molecule binds across the dimer.

The protein resides in the cytoplasm. It carries out the reaction tRNA(Ser) + L-serine + ATP = L-seryl-tRNA(Ser) + AMP + diphosphate + H(+). The catalysed reaction is tRNA(Sec) + L-serine + ATP = L-seryl-tRNA(Sec) + AMP + diphosphate + H(+). The protein operates within aminoacyl-tRNA biosynthesis; selenocysteinyl-tRNA(Sec) biosynthesis; L-seryl-tRNA(Sec) from L-serine and tRNA(Sec): step 1/1. Its function is as follows. Catalyzes the attachment of serine to tRNA(Ser). Is also able to aminoacylate tRNA(Sec) with serine, to form the misacylated tRNA L-seryl-tRNA(Sec), which will be further converted into selenocysteinyl-tRNA(Sec). In Treponema denticola (strain ATCC 35405 / DSM 14222 / CIP 103919 / JCM 8153 / KCTC 15104), this protein is Serine--tRNA ligase.